Consider the following 432-residue polypeptide: Adenylosuccinate synthetase (432 aa).

Residues 16 to 22 (GDEGKGK) and 44 to 46 (GHM) each bind GTP. Catalysis depends on D17, which acts as the Proton acceptor. The Mg(2+) site is built by D17 and G44. IMP is bound by residues 17 to 20 (DEGK), 42 to 45 (NAGH), T132, R146, Q226, T241, and R305. H45 functions as the Proton donor in the catalytic mechanism. 301–307 (LNTGRPR) serves as a coordination point for substrate. GTP contacts are provided by residues R307, 333-335 (LFD), and 415-417 (SVG).

The protein belongs to the adenylosuccinate synthetase family. In terms of assembly, homodimer. It depends on Mg(2+) as a cofactor.

Its subcellular location is the cytoplasm. The enzyme catalyses IMP + L-aspartate + GTP = N(6)-(1,2-dicarboxyethyl)-AMP + GDP + phosphate + 2 H(+). The protein operates within purine metabolism; AMP biosynthesis via de novo pathway; AMP from IMP: step 1/2. Its function is as follows. Plays an important role in the de novo pathway of purine nucleotide biosynthesis. Catalyzes the first committed step in the biosynthesis of AMP from IMP. This Mycoplasma mycoides subsp. mycoides SC (strain CCUG 32753 / NCTC 10114 / PG1) protein is Adenylosuccinate synthetase.